The primary structure comprises 539 residues: Chaperonin GroEL 1 (539 aa).

Residues 29–32, 86–90, Gly-413, and Asp-495 contribute to the ATP site; these read TLGP and DGTTT.

Belongs to the chaperonin (HSP60) family. Forms a cylinder of 14 subunits composed of two heptameric rings stacked back-to-back. Interacts with the co-chaperonin GroES.

The protein localises to the cytoplasm. It carries out the reaction ATP + H2O + a folded polypeptide = ADP + phosphate + an unfolded polypeptide.. In terms of biological role, together with its co-chaperonin GroES, plays an essential role in assisting protein folding. The GroEL-GroES system forms a nano-cage that allows encapsulation of the non-native substrate proteins and provides a physical environment optimized to promote and accelerate protein folding. In Mycobacterium bovis (strain ATCC BAA-935 / AF2122/97), this protein is Chaperonin GroEL 1.